The sequence spans 230 residues: Cytochrome c oxidase subunit 2 (230 aa).

At 1–14 (MAHPSQLGFQDAAS) the chain is on the mitochondrial intermembrane side. Residues 15-45 (PVMEELLHFHDHALMIVLLISTLVLYIIVAM) traverse the membrane as a helical segment. The Mitochondrial matrix segment spans residues 46–59 (VSTKLTNMYILDSQ). Residues 60–87 (EIEIVWTVLPAVILILIALPSLRILYLM) form a helical membrane-spanning segment. At 88–230 (DEINDPHLTI…KWSTMMLEDA (143 aa)) the chain is on the mitochondrial intermembrane side. Cu cation contacts are provided by His161, Cys196, Glu198, Cys200, His204, and Met207. Glu198 contributes to the Mg(2+) binding site.

Belongs to the cytochrome c oxidase subunit 2 family. As to quaternary structure, component of the cytochrome c oxidase (complex IV, CIV), a multisubunit enzyme composed of 14 subunits. The complex is composed of a catalytic core of 3 subunits MT-CO1, MT-CO2 and MT-CO3, encoded in the mitochondrial DNA, and 11 supernumerary subunits COX4I, COX5A, COX5B, COX6A, COX6B, COX6C, COX7A, COX7B, COX7C, COX8 and NDUFA4, which are encoded in the nuclear genome. The complex exists as a monomer or a dimer and forms supercomplexes (SCs) in the inner mitochondrial membrane with NADH-ubiquinone oxidoreductase (complex I, CI) and ubiquinol-cytochrome c oxidoreductase (cytochrome b-c1 complex, complex III, CIII), resulting in different assemblies (supercomplex SCI(1)III(2)IV(1) and megacomplex MCI(2)III(2)IV(2)). Found in a complex with TMEM177, COA6, COX18, COX20, SCO1 and SCO2. Interacts with TMEM177 in a COX20-dependent manner. Interacts with COX20. Interacts with COX16. Requires Cu cation as cofactor.

It is found in the mitochondrion inner membrane. The catalysed reaction is 4 Fe(II)-[cytochrome c] + O2 + 8 H(+)(in) = 4 Fe(III)-[cytochrome c] + 2 H2O + 4 H(+)(out). In terms of biological role, component of the cytochrome c oxidase, the last enzyme in the mitochondrial electron transport chain which drives oxidative phosphorylation. The respiratory chain contains 3 multisubunit complexes succinate dehydrogenase (complex II, CII), ubiquinol-cytochrome c oxidoreductase (cytochrome b-c1 complex, complex III, CIII) and cytochrome c oxidase (complex IV, CIV), that cooperate to transfer electrons derived from NADH and succinate to molecular oxygen, creating an electrochemical gradient over the inner membrane that drives transmembrane transport and the ATP synthase. Cytochrome c oxidase is the component of the respiratory chain that catalyzes the reduction of oxygen to water. Electrons originating from reduced cytochrome c in the intermembrane space (IMS) are transferred via the dinuclear copper A center (CU(A)) of subunit 2 and heme A of subunit 1 to the active site in subunit 1, a binuclear center (BNC) formed by heme A3 and copper B (CU(B)). The BNC reduces molecular oxygen to 2 water molecules using 4 electrons from cytochrome c in the IMS and 4 protons from the mitochondrial matrix. This chain is Cytochrome c oxidase subunit 2 (mt-co2), found in Oncorhynchus mykiss (Rainbow trout).